Here is a 1052-residue protein sequence, read N- to C-terminus: Error-prone DNA polymerase (1052 aa).

This sequence belongs to the DNA polymerase type-C family. DnaE2 subfamily.

Its subcellular location is the cytoplasm. It carries out the reaction DNA(n) + a 2'-deoxyribonucleoside 5'-triphosphate = DNA(n+1) + diphosphate. In terms of biological role, DNA polymerase involved in damage-induced mutagenesis and translesion synthesis (TLS). It is not the major replicative DNA polymerase. The polypeptide is Error-prone DNA polymerase (Bordetella bronchiseptica (strain ATCC BAA-588 / NCTC 13252 / RB50) (Alcaligenes bronchisepticus)).